The sequence spans 353 residues: Photosystem II D2 protein (353 aa).

Thr-2 is modified (N-acetylthreonine). Thr-2 bears the Phosphothreonine mark. The chain crosses the membrane as a helical span at residues 41-61 (CAYFALGGWFTGTTFVTSWYT). His-118 is a binding site for chlorophyll a. Residues 125–141 (GFMLRQFELARSVQLRP) form a helical membrane-spanning segment. 2 residues coordinate pheophytin a: Gln-130 and Asn-143. The helical transmembrane segment at 153–166 (VFVSVFLIYPLGQS) threads the bilayer. His-198 serves as a coordination point for chlorophyll a. The chain crosses the membrane as a helical span at residues 208–228 (AALLCAIHGATVENTLFEDGD). A plastoquinone is bound by residues His-215 and Phe-262. His-215 is a Fe cation binding site. His-269 contributes to the Fe cation binding site. A helical transmembrane segment spans residues 279-295 (GLWMSALGVVGLALNLR).

It belongs to the reaction center PufL/M/PsbA/D family. In terms of assembly, PSII is composed of 1 copy each of membrane proteins PsbA, PsbB, PsbC, PsbD, PsbE, PsbF, PsbH, PsbI, PsbJ, PsbK, PsbL, PsbM, PsbT, PsbX, PsbY, PsbZ, Psb30/Ycf12, at least 3 peripheral proteins of the oxygen-evolving complex and a large number of cofactors. It forms dimeric complexes. It depends on The D1/D2 heterodimer binds P680, chlorophylls that are the primary electron donor of PSII, and subsequent electron acceptors. It shares a non-heme iron and each subunit binds pheophytin, quinone, additional chlorophylls, carotenoids and lipids. There is also a Cl(-1) ion associated with D1 and D2, which is required for oxygen evolution. The PSII complex binds additional chlorophylls, carotenoids and specific lipids. as a cofactor.

The protein resides in the plastid. The protein localises to the chloroplast thylakoid membrane. It carries out the reaction 2 a plastoquinone + 4 hnu + 2 H2O = 2 a plastoquinol + O2. Functionally, photosystem II (PSII) is a light-driven water:plastoquinone oxidoreductase that uses light energy to abstract electrons from H(2)O, generating O(2) and a proton gradient subsequently used for ATP formation. It consists of a core antenna complex that captures photons, and an electron transfer chain that converts photonic excitation into a charge separation. The D1/D2 (PsbA/PsbD) reaction center heterodimer binds P680, the primary electron donor of PSII as well as several subsequent electron acceptors. D2 is needed for assembly of a stable PSII complex. This chain is Photosystem II D2 protein, found in Phaseolus vulgaris (Kidney bean).